A 960-amino-acid chain; its full sequence is Probable glutamyl endopeptidase, chloroplastic (960 aa).

Residues 1–62 (MMRFHKACHR…FSENPLTTVM (62 aa)) constitute a chloroplast transit peptide. The disordered stretch occupies residues 78–98 (SGGAEDGGGTSNGSLSASATA). Polar residues predominate over residues 89 to 98 (NGSLSASATA). Active-site charge relay system residues include serine 780, aspartate 854, and histidine 888. A disordered region spans residues 915-960 (TSDADTSPDQSKEGSDSADKVSTGTGGGNPEFGEHEVHSKLRRSLL). Residues 924-933 (QSKEGSDSAD) show a composition bias toward basic and acidic residues.

It belongs to the peptidase S9D family.

The protein localises to the plastid. It is found in the chloroplast stroma. Its function is as follows. Serine-type protease active in vitro against the LHCII N-terminal. Cleaves its substrate on the carboxy-side of Glu residues. This Arabidopsis thaliana (Mouse-ear cress) protein is Probable glutamyl endopeptidase, chloroplastic (GEP).